Reading from the N-terminus, the 218-residue chain is Peptide methionine sulfoxide reductase MsrA (218 aa).

The active site involves Cys57.

This sequence belongs to the MsrA Met sulfoxide reductase family.

The enzyme catalyses L-methionyl-[protein] + [thioredoxin]-disulfide + H2O = L-methionyl-(S)-S-oxide-[protein] + [thioredoxin]-dithiol. It carries out the reaction [thioredoxin]-disulfide + L-methionine + H2O = L-methionine (S)-S-oxide + [thioredoxin]-dithiol. Its function is as follows. Has an important function as a repair enzyme for proteins that have been inactivated by oxidation. Catalyzes the reversible oxidation-reduction of methionine sulfoxide in proteins to methionine. In Brucella melitensis biotype 1 (strain ATCC 23456 / CCUG 17765 / NCTC 10094 / 16M), this protein is Peptide methionine sulfoxide reductase MsrA.